The following is a 280-amino-acid chain: Vitamin B12-binding protein (280 aa).

The first 27 residues, Met1–Ala27, serve as a signal peptide directing secretion. The region spanning Arg30–Ala277 is the Fe/B12 periplasmic-binding domain. Tyr57 lines the cyanocob(III)alamin pocket. A disulfide bridge links Cys190 with Cys266.

It belongs to the BtuF family. The complex is composed of two ATP-binding proteins (BtuD), two transmembrane proteins (BtuC) and a solute-binding protein (BtuF).

It localises to the periplasm. Functionally, part of the ABC transporter complex BtuCDF involved in vitamin B12 import. Binds vitamin B12 and delivers it to the periplasmic surface of BtuC. This chain is Vitamin B12-binding protein, found in Yersinia pseudotuberculosis serotype O:1b (strain IP 31758).